A 372-amino-acid chain; its full sequence is NAD(P)H-quinone oxidoreductase subunit 1 (372 aa).

Helical transmembrane passes span 27–47 (LLWI…GVLV), 97–117 (VLFT…WLIV), 128–148 (VGIG…GLLM), 166–186 (AAQS…IVMM), 204–224 (FLSW…ICAL), 266–286 (VLSA…PISI), 308–328 (SLGI…AILL), and 347–367 (FLLP…LAFP).

This sequence belongs to the complex I subunit 1 family. As to quaternary structure, NDH-1 is composed of at least 11 different subunits.

Its subcellular location is the cellular thylakoid membrane. It carries out the reaction a plastoquinone + NADH + (n+1) H(+)(in) = a plastoquinol + NAD(+) + n H(+)(out). The catalysed reaction is a plastoquinone + NADPH + (n+1) H(+)(in) = a plastoquinol + NADP(+) + n H(+)(out). In terms of biological role, NDH-1 shuttles electrons from an unknown electron donor, via FMN and iron-sulfur (Fe-S) centers, to quinones in the respiratory and/or the photosynthetic chain. The immediate electron acceptor for the enzyme in this species is believed to be plastoquinone. Couples the redox reaction to proton translocation, and thus conserves the redox energy in a proton gradient. The polypeptide is NAD(P)H-quinone oxidoreductase subunit 1 (Prochlorococcus marinus (strain NATL2A)).